The sequence spans 307 residues: 4-hydroxybenzoate octaprenyltransferase (307 aa).

7 consecutive transmembrane segments (helical) span residues 27–47 (AGWLLLLWPTLGALWLAAGGF), 50–70 (WHLLAVFTLGTVLMRSAGCCI), 101–121 (LAVGAVLALAAFALVLTTNAL), 142–162 (CVAMPQAVLGVAFSFGIPMAF), 179–199 (AAVPWWAWGLLIGNLFWVLAY), 239–259 (LLAWGAIGFWQGLGVAFAAGL), and 285–305 (FRLNHWVGFAVFAGIVVDLGW).

It belongs to the UbiA prenyltransferase family. Requires Mg(2+) as cofactor.

It localises to the cell inner membrane. It catalyses the reaction all-trans-octaprenyl diphosphate + 4-hydroxybenzoate = 4-hydroxy-3-(all-trans-octaprenyl)benzoate + diphosphate. Its pathway is cofactor biosynthesis; ubiquinone biosynthesis. Functionally, catalyzes the prenylation of para-hydroxybenzoate (PHB) with an all-trans polyprenyl group. Mediates the second step in the final reaction sequence of ubiquinone-8 (UQ-8) biosynthesis, which is the condensation of the polyisoprenoid side chain with PHB, generating the first membrane-bound Q intermediate 3-octaprenyl-4-hydroxybenzoate. The sequence is that of 4-hydroxybenzoate octaprenyltransferase from Methylibium petroleiphilum (strain ATCC BAA-1232 / LMG 22953 / PM1).